The following is a 948-amino-acid chain: ELKS/Rab6-interacting/CAST family member 1 (948 aa).

A disordered region spans residues 1 to 54 (MYGSARSVGKVEPSSQSPGRSPRLPRSPRLGHRRTNSTGGSSGNSVGGGSGKTL). Lys-10 is subject to N6-acetyllysine. Over residues 13 to 28 (PSSQSPGRSPRLPRSP) the composition is skewed to low complexity. A phosphoserine mark is found at Ser-17, Ser-21, and Ser-37. Phosphothreonine is present on Thr-38. Residues 40–51 (GSSGNSVGGGSG) are compositionally biased toward gly residues. 5 positions are modified to phosphoserine: Ser-55, Ser-75, Ser-94, Ser-796, and Ser-937. Positions 144-920 (RQARDNTIMD…RMKLMADNYE (777 aa)) form a coiled coil. The span at 773 to 796 (KHKEQVEKKKSAQMLEEARRREDS) shows a compositional bias: basic and acidic residues. 2 disordered regions span residues 773-801 (KHKE…SDSS) and 903-948 (QLKQ…GIWA). Over residues 939-948 (DQDEEEGIWA) the composition is skewed to acidic residues.

As to quaternary structure, interacts with the GTB-bound forms of RAB6A isoform 1 and isoform 2 and with RAB6B. The interaction was strongest with RAB6B, followed by RAB6A isoform 2 and weakest with RAB6A isoform 1. Part of a complex with CHUK, IKBKB and IKBKG. Interacts with CHUK, IKBKB and IKBKG. The interaction with IKBKG is independent of CHUK and IKBKB. Interacts with NFKBIA. Isoform 1 interacts through its C-terminus with the PDZ domains of RIMS1 and RIMS2. Interacts with ERC2/CAST1. Interacts with SDCCAG8. Part of a cortical microtubule stabilization complex (CMSC) composed of KANK1, PPFIA1, PPFIBP1, ERC1/ELKS, PHLDB2/LL5beta, CLASPs, KIF21A and possibly additional interactors; within CMSCs KANK1 and PHLDB2/LL5beta appear to be the core components for targeting of microtubule-binding proteins KIF21A and CLASPs, whereas PPFIA1, PPFIBP1 and ERC1/ELKS serve as scaffolds for protein clustering. Isoform 1 is specifically expressed in brain. A further probable isoform is widely expressed outside of brain It is referred to as ERC1a by PubMed:12391317 and characterized by a C-terminus identical to that of isoforms 1 in human and mouse.

It is found in the cytoplasm. The protein resides in the cytoskeleton. The protein localises to the microtubule organizing center. Its subcellular location is the centrosome. It localises to the membrane. It is found in the golgi apparatus membrane. The protein resides in the presynaptic active zone. The protein localises to the cell projection. Its subcellular location is the podosome. Functionally, regulatory subunit of the IKK complex. Probably recruits IkappaBalpha/NFKBIA to the complex. May be involved in the organization of the cytomatrix at the nerve terminals active zone (CAZ) which regulates neurotransmitter release. May be involved in vesicle trafficking at the CAZ. May be involved in Rab-6 regulated endosomes to Golgi transport. The protein is ELKS/Rab6-interacting/CAST family member 1 (Erc1) of Rattus norvegicus (Rat).